Consider the following 119-residue polypeptide: Protein RALF-like 22 (119 aa).

Positions 1-23 (MTNTRAIYAVIAILAIVISAVES) are cleaved as a signal peptide. Positions 24–70 (TGDFGDSLDFVRAGSSSLFSGCTGSIAECIAEEEEMEFDSDISRRIL) are cleaved as a propeptide — removed in mature form. Cystine bridges form between C88–C98 and C111–C117.

Belongs to the plant rapid alkalinization factor (RALF) family. Proteolytically cleaved, probably by S1P, a subtilisin-like serine protease (subtilase).

The protein localises to the secreted. In terms of biological role, cell signaling peptide that may regulate plant stress, growth, and development. Mediates a rapid alkalinization of extracellular space by mediating a transient increase in the cytoplasmic Ca(2+) concentration leading to a calcium-dependent signaling events through a cell surface receptor and a concomitant activation of some intracellular mitogen-activated protein kinases. The sequence is that of Protein RALF-like 22 (RALFL22) from Arabidopsis thaliana (Mouse-ear cress).